The chain runs to 101 residues: Trp operon repressor homolog (101 aa).

The DNA-binding element occupies 59–82; sequence QREIQQNLNTSAATITRGSNMLKL.

The protein belongs to the TrpR family. Homodimer.

The protein localises to the cytoplasm. Its function is as follows. This protein is an aporepressor. When complexed with L-tryptophan it binds the operator region of the trp operon and prevents the initiation of transcription. The chain is Trp operon repressor homolog from Mannheimia succiniciproducens (strain KCTC 0769BP / MBEL55E).